The primary structure comprises 253 residues: Imidazole glycerol phosphate synthase subunit HisF (253 aa).

Residues aspartate 11 and aspartate 130 contribute to the active site.

It belongs to the HisA/HisF family. Heterodimer of HisH and HisF.

It localises to the cytoplasm. The catalysed reaction is 5-[(5-phospho-1-deoxy-D-ribulos-1-ylimino)methylamino]-1-(5-phospho-beta-D-ribosyl)imidazole-4-carboxamide + L-glutamine = D-erythro-1-(imidazol-4-yl)glycerol 3-phosphate + 5-amino-1-(5-phospho-beta-D-ribosyl)imidazole-4-carboxamide + L-glutamate + H(+). Its pathway is amino-acid biosynthesis; L-histidine biosynthesis; L-histidine from 5-phospho-alpha-D-ribose 1-diphosphate: step 5/9. Functionally, IGPS catalyzes the conversion of PRFAR and glutamine to IGP, AICAR and glutamate. The HisF subunit catalyzes the cyclization activity that produces IGP and AICAR from PRFAR using the ammonia provided by the HisH subunit. This chain is Imidazole glycerol phosphate synthase subunit HisF, found in Clostridium botulinum (strain Alaska E43 / Type E3).